The following is a 166-amino-acid chain: Cofilin-1 (166 aa).

Alanine 2 carries the N-acetylalanine modification. Serine 3 and serine 8 each carry phosphoserine. The region spanning 4-153 (GVAVSDGVIK…KDRCTLAEKL (150 aa)) is the ADF-H domain. Lysine 13 is subject to N6-acetyllysine. The residue at position 25 (threonine 25) is a Phosphothreonine. The short motif at 30–34 (KKRKK) is the Nuclear localization signal element. The residue at position 41 (serine 41) is a Phosphoserine. Phosphothreonine is present on threonine 63. Phosphotyrosine is present on tyrosine 68. Lysine 73 is modified (N6-acetyllysine). At tyrosine 82 the chain carries Phosphotyrosine. Residue lysine 132 forms a Glycyl lysine isopeptide (Lys-Gly) (interchain with G-Cter in SUMO2) linkage. At tyrosine 140 the chain carries Phosphotyrosine. The residue at position 144 (lysine 144) is an N6-acetyllysine. Serine 156 carries the phosphoserine modification.

This sequence belongs to the actin-binding proteins ADF family. Can bind G- and F-actin in a 1:1 ratio of cofilin to actin. It is a major component of intranuclear and cytoplasmic actin rods. Interacts with the subcortical maternal complex (SCMC) via interaction with TLE6 and NLRP5. Interacts with C9orf72. Inactivated by phosphorylation on Ser-3. Phosphorylated on Ser-3 in resting cells. Dephosphorylated by PDXP/chronophin; this restores its activity in promoting actin filament depolymerization. The phosphorylation of Ser-24 may prevent recognition of the nuclear localization signal. Phosphorylated via a ARRB1-RAC1-LIMK1-PAK1 cascade upon active ligand stimulation of atypical chemokine receptor ACKR2. Widely distributed in various tissues. Not found in skeletal muscle.

The protein localises to the nucleus matrix. The protein resides in the cytoplasm. It is found in the cytoskeleton. Its subcellular location is the cell projection. It localises to the ruffle membrane. The protein localises to the lamellipodium membrane. The protein resides in the lamellipodium. It is found in the growth cone. Its subcellular location is the axon. Its function is as follows. Binds to F-actin and exhibits pH-sensitive F-actin depolymerizing activity. In conjunction with the subcortical maternal complex (SCMC), plays an essential role for zygotes to progress beyond the first embryonic cell divisions via regulation of actin dynamics. Required for the centralization of the mitotic spindle and symmetric division of zygotes. Plays a role in the regulation of cell morphology and cytoskeletal organization in epithelial cells. Required for the up-regulation of atypical chemokine receptor ACKR2 from endosomal compartment to cell membrane, increasing its efficiency in chemokine uptake and degradation. Required for neural tube morphogenesis and neural crest cell migration. This is Cofilin-1 (Cfl1) from Mus musculus (Mouse).